The following is a 67-amino-acid chain: DNA-directed RNA polymerase subunit omega (67 aa).

The protein belongs to the RNA polymerase subunit omega family. As to quaternary structure, the RNAP catalytic core consists of 2 alpha, 1 beta, 1 beta' and 1 omega subunit. When a sigma factor is associated with the core the holoenzyme is formed, which can initiate transcription.

It catalyses the reaction RNA(n) + a ribonucleoside 5'-triphosphate = RNA(n+1) + diphosphate. Its function is as follows. Promotes RNA polymerase assembly. Latches the N- and C-terminal regions of the beta' subunit thereby facilitating its interaction with the beta and alpha subunits. The sequence is that of DNA-directed RNA polymerase subunit omega from Polynucleobacter asymbioticus (strain DSM 18221 / CIP 109841 / QLW-P1DMWA-1) (Polynucleobacter necessarius subsp. asymbioticus).